Consider the following 345-residue polypeptide: Protein RecA (345 aa).

66–73 (GPESSGKT) contacts ATP.

It belongs to the RecA family.

It is found in the cytoplasm. Functionally, can catalyze the hydrolysis of ATP in the presence of single-stranded DNA, the ATP-dependent uptake of single-stranded DNA by duplex DNA, and the ATP-dependent hybridization of homologous single-stranded DNAs. It interacts with LexA causing its activation and leading to its autocatalytic cleavage. The polypeptide is Protein RecA (Helicobacter hepaticus (strain ATCC 51449 / 3B1)).